A 705-amino-acid chain; its full sequence is Glycogen [starch] synthase isoform 2 (705 aa).

A UDP-binding site is contributed by Arg20. Ser159 carries the post-translational modification Phosphoserine. UDP-alpha-D-glucose-binding residues include His193 and Arg199. Alpha-D-glucose 6-phosphate is bound by residues His280, Glu281, Gln283, His286, and Lys290. Arg320 lines the UDP pocket. UDP-alpha-D-glucose is bound at residue Arg320. Ser363 and Ser467 each carry phosphoserine. His500 is an alpha-D-glucose 6-phosphate binding site. Residues Glu509, Trp511, and Gly512 each contribute to the UDP-alpha-D-glucose site. Thr514 lines the UDP pocket. Alpha-D-glucose 6-phosphate-binding residues include Arg583 and Arg587. The residue at position 651 (Ser651) is a Phosphoserine. Residue Ser655 is modified to Phosphoserine; by PHO85. A phosphoserine; by PKA mark is found at Ser661 and Ser663. A Phosphothreonine; by PHO85 modification is found at Thr668. The disordered stretch occupies residues 686 to 705 (SLGVNPAADDDDDGPYADDS). Acidic residues predominate over residues 693–705 (ADDDDDGPYADDS).

It belongs to the glycosyltransferase 3 family. In terms of assembly, interacts with PCL10. In terms of processing, phosphorylated by the cyclin-CDK PCL10-PHO85. Phosphorylation causes inactivation of enzyme.

Its subcellular location is the cytoplasm. It localises to the cytosol. It carries out the reaction [(1-&gt;4)-alpha-D-glucosyl](n) + UDP-alpha-D-glucose = [(1-&gt;4)-alpha-D-glucosyl](n+1) + UDP + H(+). Its pathway is glycan biosynthesis; glycogen biosynthesis. Allosteric activation by glucose-6-phosphate, and phosphorylation by a cAMP-dependent kinase. Functionally, glycogen synthase participates in the glycogen biosynthetic process along with glycogenin and glycogen branching enzyme. Extends the primer composed of a few glucose units formed by glycogenin by adding new glucose units to it. In this context, glycogen synthase transfers the glycosyl residue from UDP-Glc to the non-reducing end of alpha-1,4-glucan. This is Glycogen [starch] synthase isoform 2 (GSY2) from Saccharomyces cerevisiae (strain ATCC 204508 / S288c) (Baker's yeast).